We begin with the raw amino-acid sequence, 453 residues long: Serine/threonine-protein phosphatase 2A 55 kDa regulatory subunit B delta isoform (453 aa).

4 WD repeats span residues Ala32–Pro71, Glu97–Glu138, Ala181–Asn219, and Glu230–Arg270. Ser285 bears the Phosphoserine mark. 3 WD repeats span residues Glu289 to Glu327, Glu344 to Leu385, and Asp420 to Ile452. Tyr305 bears the Phosphotyrosine mark. Thr308 is modified (phosphothreonine).

It belongs to the phosphatase 2A regulatory subunit B family. In terms of assembly, PP2A consists of a common heterodimeric core enzyme, composed of a 36 kDa catalytic subunit (subunit C) and a 65 kDa constant regulatory subunit (PR65 or subunit A), that associates with a variety of regulatory subunits. Proteins that associate with the core dimer include three families of regulatory subunits B (the R2/B/PR55/B55, R3/B''/PR72/PR130/PR59 and R5/B'/B56 families), the 48 kDa variable regulatory subunit, viral proteins, and cell signaling molecules. Interacts with ENSA (when phosphorylated at 'Ser-67') and ARPP19 (when phosphorylated at 'Ser-62'), leading to inhibit PP2A activity. Interacts with IER5.

It localises to the cytoplasm. In terms of biological role, substrate-recognition subunit of protein phosphatase 2A (PP2A) that plays a key role in cell cycle by controlling mitosis entry and exit. Involved in chromosome clustering during late mitosis by mediating dephosphorylation of MKI67. The activity of PP2A complexes containing PPP2R2D (PR55-delta) fluctuate during the cell cycle: the activity is high in interphase and low in mitosis. The chain is Serine/threonine-protein phosphatase 2A 55 kDa regulatory subunit B delta isoform (PPP2R2D) from Homo sapiens (Human).